The chain runs to 413 residues: L-cysteine:1D-myo-inositol 2-amino-2-deoxy-alpha-D-glucopyranoside ligase (413 aa).

Residue cysteine 15 participates in Zn(2+) binding. Residues 15-18 (CGIT), threonine 30, and 53-55 (NVT) each bind L-cysteinyl-5'-AMP. Positions 17 to 27 (ITPYDATHLGH) match the 'HIGH' region motif. The 'ERGGDP' region motif lies at 155–160 (ERGGDP). Tryptophan 195 contacts L-cysteinyl-5'-AMP. Zn(2+) is bound at residue cysteine 199. 217–219 (GTD) is a binding site for L-cysteinyl-5'-AMP. Histidine 224 contacts Zn(2+). Valine 251 is a binding site for L-cysteinyl-5'-AMP. The short motif at 257 to 261 (KMSKS) is the 'KMSKS' region element.

This sequence belongs to the class-I aminoacyl-tRNA synthetase family. MshC subfamily. As to quaternary structure, monomer. Zn(2+) is required as a cofactor.

The catalysed reaction is 1D-myo-inositol 2-amino-2-deoxy-alpha-D-glucopyranoside + L-cysteine + ATP = 1D-myo-inositol 2-(L-cysteinylamino)-2-deoxy-alpha-D-glucopyranoside + AMP + diphosphate + H(+). Its function is as follows. Catalyzes the ATP-dependent condensation of GlcN-Ins and L-cysteine to form L-Cys-GlcN-Ins. This Frankia alni (strain DSM 45986 / CECT 9034 / ACN14a) protein is L-cysteine:1D-myo-inositol 2-amino-2-deoxy-alpha-D-glucopyranoside ligase.